The following is a 361-amino-acid chain: 5-exo-hydroxycamphor dehydrogenase (361 aa).

Zn(2+) contacts are provided by C40, H62, C98, C101, C104, and C170.

The protein belongs to the zinc-containing alcohol dehydrogenase family. Requires Zn(2+) as cofactor.

The catalysed reaction is (1R,4R,5R)-5-hydroxycamphor + NAD(+) = (1R,4R)-bornane-2,5-dione + NADH + H(+). It functions in the pathway terpene metabolism; (R)-camphor degradation. The protein is 5-exo-hydroxycamphor dehydrogenase (camD) of Pseudomonas putida (Arthrobacter siderocapsulatus).